Reading from the N-terminus, the 375-residue chain is Queuine tRNA-ribosyltransferase (375 aa).

Asp-93 (proton acceptor) is an active-site residue. Residues 93–97 (DSGGF), Asp-147, Gln-191, and Gly-218 contribute to the substrate site. Residues 249–255 (GVGTPLD) form an RNA binding region. Asp-268 acts as the Nucleophile in catalysis. The segment at 273–277 (TRNAR) is RNA binding; important for wobble base 34 recognition. The Zn(2+) site is built by Cys-306, Cys-308, Cys-311, and His-337.

Belongs to the queuine tRNA-ribosyltransferase family. Homodimer. Within each dimer, one monomer is responsible for RNA recognition and catalysis, while the other monomer binds to the replacement base PreQ1. The cofactor is Zn(2+).

The enzyme catalyses 7-aminomethyl-7-carbaguanine + guanosine(34) in tRNA = 7-aminomethyl-7-carbaguanosine(34) in tRNA + guanine. Its pathway is tRNA modification; tRNA-queuosine biosynthesis. Its function is as follows. Catalyzes the base-exchange of a guanine (G) residue with the queuine precursor 7-aminomethyl-7-deazaguanine (PreQ1) at position 34 (anticodon wobble position) in tRNAs with GU(N) anticodons (tRNA-Asp, -Asn, -His and -Tyr). Catalysis occurs through a double-displacement mechanism. The nucleophile active site attacks the C1' of nucleotide 34 to detach the guanine base from the RNA, forming a covalent enzyme-RNA intermediate. The proton acceptor active site deprotonates the incoming PreQ1, allowing a nucleophilic attack on the C1' of the ribose to form the product. After dissociation, two additional enzymatic reactions on the tRNA convert PreQ1 to queuine (Q), resulting in the hypermodified nucleoside queuosine (7-(((4,5-cis-dihydroxy-2-cyclopenten-1-yl)amino)methyl)-7-deazaguanosine). The chain is Queuine tRNA-ribosyltransferase from Nitratidesulfovibrio vulgaris (strain DP4) (Desulfovibrio vulgaris).